A 362-amino-acid chain; its full sequence is Guanine nucleotide-binding protein alpha-10 subunit (362 aa).

The N-myristoyl glycine moiety is linked to residue Gly2. Cys4 carries S-palmitoyl cysteine lipidation. A G-alpha domain is found at Leu35–Ile362. The G1 motif stretch occupies residues Ser38–Thr51. GTP is bound by residues Gly43–Ser50, Val184–Thr190, Asp209–Gln213, Asn278–Asp281, and Ala335. Ser50 and Thr190 together coordinate Mg(2+). Residues Asp182–Thr190 form a G2 motif region. Residues Leu205–Arg214 form a G3 motif region. Residues Ile274 to Asp281 form a G4 motif region. The tract at residues Thr333–Ser337 is G5 motif.

It belongs to the G-alpha family. In terms of assembly, g proteins are composed of 3 units; alpha, beta and gamma. The alpha chain contains the guanine nucleotide binding site.

In terms of biological role, guanine nucleotide-binding proteins (G proteins) are involved as modulators or transducers in various transmembrane signaling systems. The chain is Guanine nucleotide-binding protein alpha-10 subunit (gpa-10) from Caenorhabditis briggsae.